We begin with the raw amino-acid sequence, 147 residues long: uncharacterized protein (147 aa).

The region spanning 1 to 137 (MRDNTIGSLI…LYELMTKVHK (137 aa)) is the HTH marR-type domain. The H-T-H motif DNA-binding region spans 53 to 76 (QMELAEKVTVTQGGISRMLTRLEK).

This is an uncharacterized protein from Bacillus thuringiensis subsp. konkukian (strain 97-27).